The following is a 240-amino-acid chain: Probable septum site-determining protein MinC (240 aa).

It belongs to the MinC family. As to quaternary structure, interacts with MinD and FtsZ.

Cell division inhibitor that blocks the formation of polar Z ring septums. Rapidly oscillates between the poles of the cell to destabilize FtsZ filaments that have formed before they mature into polar Z rings. Prevents FtsZ polymerization. This is Probable septum site-determining protein MinC from Aeromonas hydrophila subsp. hydrophila (strain ATCC 7966 / DSM 30187 / BCRC 13018 / CCUG 14551 / JCM 1027 / KCTC 2358 / NCIMB 9240 / NCTC 8049).